A 406-amino-acid polypeptide reads, in one-letter code: Probable 26S proteasome regulatory subunit 10B (406 aa).

Position 191–198 (191–198 (GPPGTGKT)) interacts with ATP.

It belongs to the AAA ATPase family.

Its subcellular location is the cytoplasm. It localises to the nucleus. Its function is as follows. The 26S proteasome is involved in the ATP-dependent degradation of ubiquitinated proteins. The regulatory (or ATPase) complex confers ATP dependency and substrate specificity to the 26S complex. The protein is Probable 26S proteasome regulatory subunit 10B (rpt-4) of Caenorhabditis elegans.